Consider the following 59-residue polypeptide: Large ribosomal subunit protein bL32 (59 aa).

It belongs to the bacterial ribosomal protein bL32 family.

This Rhizorhabdus wittichii (strain DSM 6014 / CCUG 31198 / JCM 15750 / NBRC 105917 / EY 4224 / RW1) (Sphingomonas wittichii) protein is Large ribosomal subunit protein bL32.